Here is a 390-residue protein sequence, read N- to C-terminus: Na(+)/H(+) antiporter NhaA 2 (390 aa).

11 helical membrane passes run isoleucine 23–alanine 43, leucine 63–isoleucine 83, leucine 100–threonine 120, glycine 129–glycine 149, leucine 158–phenylalanine 178, serine 181–valine 201, alanine 208–isoleucine 228, glycine 265–phenylalanine 285, leucine 293–valine 313, leucine 331–leucine 351, and glutamate 362–leucine 382.

This sequence belongs to the NhaA Na(+)/H(+) (TC 2.A.33) antiporter family.

The protein resides in the cell inner membrane. It carries out the reaction Na(+)(in) + 2 H(+)(out) = Na(+)(out) + 2 H(+)(in). Na(+)/H(+) antiporter that extrudes sodium in exchange for external protons. This chain is Na(+)/H(+) antiporter NhaA 2, found in Novosphingobium aromaticivorans (strain ATCC 700278 / DSM 12444 / CCUG 56034 / CIP 105152 / NBRC 16084 / F199).